A 171-amino-acid polypeptide reads, in one-letter code: MNKFLFFIFVFVGISFAGDDTATKDYDIVWRTINFAIFFGILFYLIKGPIKNAYNARINRISSRLEAIQTKLKESKEKKEASKKNLEDVKQKCVELIETAKKEAIQLDEKIQQSAQIDIAQMQKSFAEQKEFEIRRLKKSVTAEILDELFNEKSVNLSQNELINLVQKKVV.

The helical transmembrane segment at Lys3–Thr23 threads the bilayer.

Belongs to the ATPase B chain family. F-type ATPases have 2 components, F(1) - the catalytic core - and F(0) - the membrane proton channel. F(1) has five subunits: alpha(3), beta(3), gamma(1), delta(1), epsilon(1). F(0) has three main subunits: a(1), b(2) and c(10-14). The alpha and beta chains form an alternating ring which encloses part of the gamma chain. F(1) is attached to F(0) by a central stalk formed by the gamma and epsilon chains, while a peripheral stalk is formed by the delta and b chains.

It localises to the cell inner membrane. F(1)F(0) ATP synthase produces ATP from ADP in the presence of a proton or sodium gradient. F-type ATPases consist of two structural domains, F(1) containing the extramembraneous catalytic core and F(0) containing the membrane proton channel, linked together by a central stalk and a peripheral stalk. During catalysis, ATP synthesis in the catalytic domain of F(1) is coupled via a rotary mechanism of the central stalk subunits to proton translocation. Functionally, component of the F(0) channel, it forms part of the peripheral stalk, linking F(1) to F(0). This chain is ATP synthase subunit b, found in Campylobacter hominis (strain ATCC BAA-381 / DSM 21671 / CCUG 45161 / LMG 19568 / NCTC 13146 / CH001A).